Here is a 458-residue protein sequence, read N- to C-terminus: Flavohemoprotein (458 aa).

The Globin domain maps to 2-158 (PLSEDTIKAV…LAHLFVRREE (157 aa)). His-107 lines the heme b pocket. Active-site charge relay system residues include Tyr-117 and Glu-157. The tract at residues 169 to 457 (GGWRQTRSFR…FEMFGPFKPL (289 aa)) is reductase. The region spanning 172 to 279 (RQTRSFRVEE…APPYGDFFLE (108 aa)) is the FAD-binding FR-type domain. Residues Tyr-211 and 228–231 (RQYS) contribute to the FAD site. 320–325 (GIGQTP) serves as a coordination point for NADP(+). 450-453 (MFGP) is an FAD binding site.

This sequence belongs to the globin family. Two-domain flavohemoproteins subfamily. In the C-terminal section; belongs to the flavoprotein pyridine nucleotide cytochrome reductase family. Monomer. The cofactor is heme b. Requires FAD as cofactor.

The catalysed reaction is 2 nitric oxide + NADPH + 2 O2 = 2 nitrate + NADP(+) + H(+). The enzyme catalyses 2 nitric oxide + NADH + 2 O2 = 2 nitrate + NAD(+) + H(+). Its function is as follows. Flavohemoprotein involved in nitric oxide (NO) detoxification in an aerobic process, termed nitric oxide dioxygenase (NOD) reaction that utilizes O(2) and NAD(P)H to convert NO to nitrate, which protects the protozoan parasite from various noxious nitrogen compounds. Therefore, plays a central role in the inducible response to nitrosative stress. May also be involved in O(2) detoxification. The sequence is that of Flavohemoprotein (hmpA) from Giardia intestinalis (strain ATCC 50581 / GS clone H7) (Giardia lamblia).